Reading from the N-terminus, the 237-residue chain is (5-formylfuran-3-yl)methyl phosphate synthase (237 aa).

Residue Lys29 is the Schiff-base intermediate with substrate of the active site. The active-site Proton acceptor is Lys87.

It belongs to the MfnB family.

The enzyme catalyses 2 D-glyceraldehyde 3-phosphate = 4-(hydroxymethyl)-2-furancarboxaldehyde phosphate + phosphate + 2 H2O. It participates in cofactor biosynthesis; methanofuran biosynthesis. Functionally, catalyzes the formation of 4-(hydroxymethyl)-2-furancarboxaldehyde phosphate (4-HFC-P) from two molecules of glyceraldehyde-3-P (GA-3-P). This chain is (5-formylfuran-3-yl)methyl phosphate synthase, found in Methanopyrus kandleri (strain AV19 / DSM 6324 / JCM 9639 / NBRC 100938).